The chain runs to 185 residues: MGVSTPVIVPRGGAPVPPGPDQDLILGQVAREIEEKGFVLSNVDSLVNWARAGSLWPMTFGLACCALEMIHCACARYDLDRFGTVFRPSPRQSDVMIVAGTLTNKMAPALRKVYDQMAEPRWVISMGSCANGGGYYHYSYSVVRGCDRIVPVDIYVPGCPPTSEALLYGVLQLQKKIKRTGALYR.

[4Fe-4S] cluster is bound by residues Cys-64, Cys-65, Cys-129, and Cys-159.

Belongs to the complex I 20 kDa subunit family. NDH-1 is composed of 14 different subunits. Subunits NuoB, C, D, E, F, and G constitute the peripheral sector of the complex. Requires [4Fe-4S] cluster as cofactor.

Its subcellular location is the cell inner membrane. The catalysed reaction is a quinone + NADH + 5 H(+)(in) = a quinol + NAD(+) + 4 H(+)(out). In terms of biological role, NDH-1 shuttles electrons from NADH, via FMN and iron-sulfur (Fe-S) centers, to quinones in the respiratory chain. Couples the redox reaction to proton translocation (for every two electrons transferred, four hydrogen ions are translocated across the cytoplasmic membrane), and thus conserves the redox energy in a proton gradient. This chain is NADH-quinone oxidoreductase subunit B, found in Rhodospirillum rubrum (strain ATCC 11170 / ATH 1.1.1 / DSM 467 / LMG 4362 / NCIMB 8255 / S1).